Consider the following 864-residue polypeptide: Mitochondrial 15S rRNA processing factor CCM1 (864 aa).

Residues 1 to 76 (MYMARCGPKN…REFSNTLKER (76 aa)) constitute a mitochondrion transit peptide. 2 PPR repeats span residues 319-353 (NKQNLTTVIQFYSRKEMTKQAWNTFDTMKFLSTKH) and 356-390 (DICTYNTMLRICEKERNFPKALDLFQEIQDHNIKP).

Belongs to the CCM1 family. In terms of assembly, binds to mitochondrial small subunit 15S rRNA.

It localises to the mitochondrion. Regulates mitochondrial small subunit maturation by controlling 15S rRNA 5'-end processing. Localizes to the 5' precursor of the 15S rRNA in a position that is subsequently occupied by mS47 in the mature yeast mtSSU. Uses structure and sequence-specific RNA recognition, binding to a single-stranded region of the precursor and specifically recognizing bases -6 to -1. The exchange of Ccm1 for mS47 is coupled to the irreversible removal of precursor rRNA that is accompanied by conformational changes of the mitoribosomal proteins uS5m and mS26. These conformational changes signal completion of 5'-end rRNA processing through protection of the mature 5'-end of the 15S rRNA and stabilization of mS47. The removal of the 5' precursor together with the dissociation of Ccm1 may be catalyzed by the 5'-3' exoribonuclease Pet127. Involved in the specific removal of group I introns in mitochondrial encoded transcripts. This is Mitochondrial 15S rRNA processing factor CCM1 (CCM1) from Saccharomyces cerevisiae (strain JAY291) (Baker's yeast).